The following is a 556-amino-acid chain: MERVWFAKLTNKGTIKIGYISFILLSLLCQSLIGLVNADFNYEGCYSAADIQSAGLSLKNSYIYQSVSYCQNQCPESAVVALFNGSDCYCGNSVSFLTSLTKSTDSNCGTKCSGWPYQMCGGSSYMNVYVNAETFVSSVESSSSKEGSSTSYMPSTTSSLSSAQISSTTRRTSTDMKSSEMIATTVSTTSTTSSSTSSTTSSTTSSTTSSTTSSTTSSSTSSTTSSTTSSTTSSTTSSTTSSTTSSTTSSTTSSTTSIFSVTSSSSSITLSSSEHTTVDSRTSSPSSTLVPVSSSSSTLSTPKVTSMTPSTSSTIPIVTSVELVTSVVTKAIVSTSDQHQETIFVTRTSVVERSSEVATATAAASNNRSNSTSKQRLSGGAIAGIVIGVVFGVIFIILILLFLIWRRRKSHDQLDLEETKHYQPYSFGDEDANPIGPPPSSGTTNWMRHSRGNTAGSIGTSNMYGFSMSNGANYSSPSSNTSGSIINNLAGLQDATVQKQNLPSTVFEEANTLNSANERFSANSLPDMMMSGPLQVVNPDNPDNPELSSTVSHNRA.

An N-terminal signal peptide occupies residues Met-1–Ala-38. Residues Asp-39 to Ala-132 form the WSC domain. At Asp-39–Gly-384 the chain is on the extracellular side. Residue Asn-84 is glycosylated (N-linked (GlcNAc...) asparagine). 2 stretches are compositionally biased toward low complexity: residues Ser-142–Thr-169 and Thr-184–Ser-257. Disordered stretches follow at residues Ser-142 to Ser-257 and Thr-269 to Ser-312. N-linked (GlcNAc...) asparagine glycans are attached at residues Asn-367 and Asn-370. Residues Ile-385–Trp-405 traverse the membrane as a helical segment. At Arg-406 to Ala-556 the chain is on the cytoplasmic side. 2 disordered regions span residues Tyr-425–Thr-444 and Leu-534–Ala-556. The segment covering Glu-546–Ala-556 has biased composition (polar residues).

The protein resides in the membrane. The protein is Cell wall integrity and stress response component 3 (WSC3) of Saccharomyces cerevisiae (strain ATCC 204508 / S288c) (Baker's yeast).